We begin with the raw amino-acid sequence, 244 residues long: Purine nucleoside phosphorylase HI_0175 (244 aa).

The Zn(2+) site is built by histidine 70, cysteine 105, and histidine 122.

This sequence belongs to the purine nucleoside phosphorylase YfiH/LACC1 family. Homodimer. Cu(2+) serves as cofactor. Zn(2+) is required as a cofactor.

The catalysed reaction is adenosine + phosphate = alpha-D-ribose 1-phosphate + adenine. The enzyme catalyses S-methyl-5'-thioadenosine + phosphate = 5-(methylsulfanyl)-alpha-D-ribose 1-phosphate + adenine. It catalyses the reaction inosine + phosphate = alpha-D-ribose 1-phosphate + hypoxanthine. It carries out the reaction adenosine + H2O + H(+) = inosine + NH4(+). Its function is as follows. Purine nucleoside enzyme that catalyzes the phosphorolysis of adenosine and inosine nucleosides, yielding D-ribose 1-phosphate and the respective free bases, adenine and hypoxanthine. Also catalyzes the phosphorolysis of S-methyl-5'-thioadenosine into adenine and S-methyl-5-thio-alpha-D-ribose 1-phosphate. Also has adenosine deaminase activity. The polypeptide is Purine nucleoside phosphorylase HI_0175 (Haemophilus influenzae (strain ATCC 51907 / DSM 11121 / KW20 / Rd)).